Reading from the N-terminus, the 262-residue chain is Troponin T, slow skeletal muscle (262 aa).

The span at Met-1–Pro-31 shows a compositional bias: acidic residues. Disordered regions lie at residues Met-1 to Asp-62 and Glu-109 to Val-153. Ser-2 bears the Phosphoserine; by CK2 mark. Over residues Val-32–Lys-41 the composition is skewed to basic and acidic residues. Pro residues predominate over residues Ser-43–Ile-55. A compositionally biased stretch (basic and acidic residues) spans Glu-109–Lys-149.

Belongs to the troponin T family. Interacts with TPM3. Expressed in adult soleus muscle.

Functionally, troponin T is the tropomyosin-binding subunit of troponin, the thin filament regulatory complex which confers calcium-sensitivity to striated muscle actomyosin ATPase activity. The sequence is that of Troponin T, slow skeletal muscle (Tnnt1) from Mus musculus (Mouse).